The following is a 511-amino-acid chain: MSHFELQPGQLQLSELRDWFYQHQTLKLSDEAKDNIATSAKTVADVLEQGRVVYGINTGFGLLANTRIPPERLTDLQRRIVLSHAAGTGDLMEDSVVRLMLLLKINSLSRGFSGVRQVLVDALIKLLNAEVYPCIPEKGSVGASGDLAPLAHMVLPLVGEGTVRHNGKVLNAEEGLKIAGIEPFELAPKEGLALLNGTQASTALALAGLFRIERNFHAAIVVGATSVEAAMGSRAPFDERVHAVRGQPGQIKAAEMLRHVLTDSSEIAKDHENCEKVQDPYSLRCQPQVMGAVLDQIEHASGILVREANGVTDNPLVFSEEQDIISGGNFHAEPVAMAADILAIAASEIGALSERRSALLIDSHLSKLPAFLVNDGGVNSGFMLAQVTAAALASENKTLAHPASVDSLPTSANQEDHVSMATFAARRLTDIAKNVSDIIAIEWLEAAQGLDFRRPLKGAAAVETAFNCLREQVAYYAEDRFFAPDIKAASDLIQNGELAAVVKLPHILSEV.

The 5-imidazolinone (Ala-Gly) cross-link spans 143-145 (ASG). Position 144 is a 2,3-didehydroalanine (Ser) (S144).

This sequence belongs to the PAL/histidase family. In terms of processing, contains an active site 4-methylidene-imidazol-5-one (MIO), which is formed autocatalytically by cyclization and dehydration of residues Ala-Ser-Gly.

It is found in the cytoplasm. The enzyme catalyses L-histidine = trans-urocanate + NH4(+). It participates in amino-acid degradation; L-histidine degradation into L-glutamate; N-formimidoyl-L-glutamate from L-histidine: step 1/3. This is Histidine ammonia-lyase from Idiomarina loihiensis (strain ATCC BAA-735 / DSM 15497 / L2-TR).